The primary structure comprises 293 residues: Phosphatidylglycerol--prolipoprotein diacylglyceryl transferase (293 aa).

The next 4 helical transmembrane spans lie at 4–24 (ILAFLSIAAGSTLFFVFLFIF), 45–65 (FELRWYSTLILTGFLISYFVA), 81–101 (ELIFYGVIAGIVGARLYYVLF), and 115–135 (IWEGGLAIHGAVIGALLTGFL). An a 1,2-diacyl-sn-glycero-3-phospho-(1'-sn-glycerol)-binding site is contributed by Arg-165. A run of 3 helical transmembrane segments spans residues 204–224 (PTFLYESIWDLLVFFMLSVYF), 231–249 (HGEVTCLYFVLYSLGRIVI), and 262–282 (IKAAQLLSAVLILLGFTGFLI).

It belongs to the Lgt family.

It localises to the cell inner membrane. It catalyses the reaction L-cysteinyl-[prolipoprotein] + a 1,2-diacyl-sn-glycero-3-phospho-(1'-sn-glycerol) = an S-1,2-diacyl-sn-glyceryl-L-cysteinyl-[prolipoprotein] + sn-glycerol 1-phosphate + H(+). The protein operates within protein modification; lipoprotein biosynthesis (diacylglyceryl transfer). In terms of biological role, catalyzes the transfer of the diacylglyceryl group from phosphatidylglycerol to the sulfhydryl group of the N-terminal cysteine of a prolipoprotein, the first step in the formation of mature lipoproteins. The protein is Phosphatidylglycerol--prolipoprotein diacylglyceryl transferase of Thermotoga petrophila (strain ATCC BAA-488 / DSM 13995 / JCM 10881 / RKU-1).